The primary structure comprises 344 residues: Programmed cell death protein 2 (344 aa).

Residues C135, C138, C146, C149, C155, H159, H168, and C172 each coordinate Zn(2+). An MYND-type; atypical zinc finger spans residues 135–172 (CRVCGCSGPKRCSRCHKAHYCSKEHQSLDWRLGHKQAC).

In terms of processing, ubiquitinated by PRKN, promoting proteasomal degradation.

It localises to the nucleus. Its function is as follows. May be a DNA-binding protein with a regulatory function. May play an important role in cell death and/or in regulation of cell proliferation. This is Programmed cell death protein 2 (PDCD2) from Bos taurus (Bovine).